We begin with the raw amino-acid sequence, 250 residues long: uncharacterized protein (250 aa).

Residues Glu-97, Glu-99, and Asp-128 each coordinate a divalent metal cation.

Belongs to the FAH family.

This is an uncharacterized protein from Archaeoglobus fulgidus (strain ATCC 49558 / DSM 4304 / JCM 9628 / NBRC 100126 / VC-16).